Consider the following 32-residue polypeptide: Calcitonin (32 aa).

Cysteines 1 and 7 form a disulfide. Proline 32 carries the proline amide modification.

This sequence belongs to the calcitonin family.

The protein localises to the secreted. Functionally, causes a rapid but short-lived drop in the level of calcium and phosphate in blood by promoting the incorporation of those ions in the bones. The protein is Calcitonin of Aquarana catesbeiana (American bullfrog).